A 296-amino-acid polypeptide reads, in one-letter code: Small ribosomal subunit protein uS2 (296 aa).

The segment at 252–296 (TSSKTVSKLKQSKKLSKTQNIDEETNTEFDQALGGACENNNSDNT) is disordered.

Belongs to the universal ribosomal protein uS2 family.

The sequence is that of Small ribosomal subunit protein uS2 (rpsB) from Rickettsia prowazekii (strain Madrid E).